We begin with the raw amino-acid sequence, 223 residues long: Ribose-5-phosphate isomerase A (223 aa).

Substrate-binding positions include 28 to 31 (TGST), 81 to 84 (DGTD), and 94 to 97 (KGGG). The active-site Proton acceptor is the glutamate 103. Substrate is bound at residue lysine 121.

This sequence belongs to the ribose 5-phosphate isomerase family. As to quaternary structure, homodimer.

The catalysed reaction is aldehydo-D-ribose 5-phosphate = D-ribulose 5-phosphate. The protein operates within carbohydrate degradation; pentose phosphate pathway; D-ribose 5-phosphate from D-ribulose 5-phosphate (non-oxidative stage): step 1/1. In terms of biological role, catalyzes the reversible conversion of ribose-5-phosphate to ribulose 5-phosphate. The chain is Ribose-5-phosphate isomerase A from Baumannia cicadellinicola subsp. Homalodisca coagulata.